A 194-amino-acid chain; its full sequence is ATP-dependent Clp protease proteolytic subunit (194 aa).

Serine 98 functions as the Nucleophile in the catalytic mechanism. Histidine 123 is a catalytic residue.

This sequence belongs to the peptidase S14 family. In terms of assembly, fourteen ClpP subunits assemble into 2 heptameric rings which stack back to back to give a disk-like structure with a central cavity, resembling the structure of eukaryotic proteasomes.

The protein resides in the cytoplasm. The catalysed reaction is Hydrolysis of proteins to small peptides in the presence of ATP and magnesium. alpha-casein is the usual test substrate. In the absence of ATP, only oligopeptides shorter than five residues are hydrolyzed (such as succinyl-Leu-Tyr-|-NHMec, and Leu-Tyr-Leu-|-Tyr-Trp, in which cleavage of the -Tyr-|-Leu- and -Tyr-|-Trp bonds also occurs).. Cleaves peptides in various proteins in a process that requires ATP hydrolysis. Has a chymotrypsin-like activity. Plays a major role in the degradation of misfolded proteins. In Wigglesworthia glossinidia brevipalpis, this protein is ATP-dependent Clp protease proteolytic subunit.